The primary structure comprises 668 residues: Penicillin-binding protein 3 (668 aa).

The helical transmembrane segment at 7–23 threads the bilayer; sequence LLVFLCVGLIGLIGCSK. Serine 410 functions as the Acyl-ester intermediate in the catalytic mechanism.

It belongs to the transpeptidase family.

It is found in the cell membrane. The protein localises to the forespore inner membrane. Its subcellular location is the forespore outer membrane. The protein resides in the membrane raft. It catalyses the reaction Preferential cleavage: (Ac)2-L-Lys-D-Ala-|-D-Ala. Also transpeptidation of peptidyl-alanyl moieties that are N-acyl substituents of D-alanine.. It participates in cell wall biogenesis; peptidoglycan biosynthesis. Functionally, penicillin-binding proteins (PBPs) function in the late steps of murein biosynthesis. Probably required for both cortical and vegetative peptidoglycan synthesis. Although not usually required for cell division, in the absence of PBP 2B (pbpB) it becomes essential. Confers resistance to oxacillin and cephalexin. This chain is Penicillin-binding protein 3, found in Bacillus subtilis (strain 168).